The sequence spans 129 residues: Glycine cleavage system H protein (129 aa).

A Lipoyl-binding domain is found at 24-106 (TYTVGITEHA…YAGGWIFKIK (83 aa)). Lys-65 bears the N6-lipoyllysine mark.

Belongs to the GcvH family. In terms of assembly, the glycine cleavage system is composed of four proteins: P, T, L and H. Requires (R)-lipoate as cofactor.

Its function is as follows. The glycine cleavage system catalyzes the degradation of glycine. The H protein shuttles the methylamine group of glycine from the P protein to the T protein. This is Glycine cleavage system H protein from Shigella dysenteriae serotype 1 (strain Sd197).